The sequence spans 73 residues: uncharacterized protein (73 aa).

The first 21 residues, 1–21, serve as a signal peptide directing secretion; the sequence is MTLFSSLSSLSTGSLKSSVSS. Residues 1-38 show a composition bias toward low complexity; sequence MTLFSSLSSLSTGSLKSSVSSIETGSSSGSFGSNETSG. Residues 1 to 43 are disordered; it reads MTLFSSLSSLSTGSLKSSVSSIETGSSSGSFGSNETSGWGSHH. An N-linked (GlcNAc...) asparagine glycan is attached at N34.

The protein resides in the secreted. This is an uncharacterized protein from Dictyostelium discoideum (Social amoeba).